We begin with the raw amino-acid sequence, 240 residues long: tRNA1(Val) (adenine(37)-N6)-methyltransferase (240 aa).

Belongs to the methyltransferase superfamily. tRNA (adenine-N(6)-)-methyltransferase family.

The protein localises to the cytoplasm. It catalyses the reaction adenosine(37) in tRNA1(Val) + S-adenosyl-L-methionine = N(6)-methyladenosine(37) in tRNA1(Val) + S-adenosyl-L-homocysteine + H(+). Functionally, specifically methylates the adenine in position 37 of tRNA(1)(Val) (anticodon cmo5UAC). This is tRNA1(Val) (adenine(37)-N6)-methyltransferase from Vibrio cholerae serotype O1 (strain ATCC 39315 / El Tor Inaba N16961).